A 338-amino-acid polypeptide reads, in one-letter code: Malate dehydrogenase, mitochondrial (338 aa).

A mitochondrion-targeting transit peptide spans 1-24 (MLSALARPASAVLRRSFSTSAQNN). NAD(+) is bound by residues 31–37 (GASGGIG) and aspartate 57. An O-linked (GlcNAc) serine glycan is attached at serine 33. 2 positions are modified to N6-acetyllysine; alternate: lysine 78 and lysine 91. 2 positions are modified to N6-succinyllysine; alternate: lysine 78 and lysine 91. Positions 104 and 110 each coordinate substrate. Residues asparagine 117 and 140-142 (IAN) each bind NAD(+). Asparagine 142 is a substrate binding site. Lysine 165 bears the N6-acetyllysine mark. Residue arginine 176 participates in substrate binding. Lysine 185 bears the N6-acetyllysine; alternate mark. Lysine 185 bears the N6-succinyllysine; alternate mark. Histidine 200 acts as the Proton acceptor in catalysis. The residue at position 203 (lysine 203) is an N6-succinyllysine. 2 positions are modified to N6-acetyllysine; alternate: lysine 215 and lysine 239. Residues lysine 215 and lysine 239 each carry the N6-succinyllysine; alternate modification. Lysine 239 carries the N6-malonyllysine; alternate modification. Serine 246 is modified (phosphoserine). Methionine 251 provides a ligand contact to NAD(+). An N6-succinyllysine modification is found at lysine 269. Lysine 296, lysine 301, lysine 307, lysine 314, and lysine 324 each carry N6-acetyllysine; alternate. N6-succinyllysine; alternate occurs at positions 296, 301, 307, 314, and 324. Lysine 307 is modified (N6-malonyllysine; alternate). Position 326 is a phosphoserine (serine 326). N6-acetyllysine; alternate occurs at positions 328, 329, and 335. N6-succinyllysine; alternate is present on lysine 328. Residue lysine 329 is modified to N6-malonyllysine; alternate. Lysine 335 carries the N6-succinyllysine; alternate modification.

This sequence belongs to the LDH/MDH superfamily. MDH type 1 family. Homodimer. In terms of processing, acetylation is enhanced after treatment either with trichostin A (TCA) or with nicotinamide (NAM) with the appearance of tri- and tetraacetylations. Glucose also increases acetylation.

Its subcellular location is the mitochondrion matrix. The enzyme catalyses (S)-malate + NAD(+) = oxaloacetate + NADH + H(+). With respect to regulation, enzyme activity is enhanced by acetylation. The chain is Malate dehydrogenase, mitochondrial (MDH2) from Pongo abelii (Sumatran orangutan).